The sequence spans 122 residues: Acidic phospholipase A2 (122 aa).

7 disulfides stabilise this stretch: cysteine 26-cysteine 115, cysteine 28-cysteine 44, cysteine 43-cysteine 95, cysteine 49-cysteine 122, cysteine 50-cysteine 88, cysteine 57-cysteine 81, and cysteine 75-cysteine 86. The Ca(2+) site is built by tyrosine 27, glycine 29, and glycine 31. The active site involves histidine 47. Aspartate 48 is a Ca(2+) binding site. Aspartate 89 is an active-site residue.

It depends on Ca(2+) as a cofactor. In terms of tissue distribution, expressed by the venom gland.

It localises to the secreted. The catalysed reaction is a 1,2-diacyl-sn-glycero-3-phosphocholine + H2O = a 1-acyl-sn-glycero-3-phosphocholine + a fatty acid + H(+). PLA2 catalyzes the calcium-dependent hydrolysis of the 2-acyl groups in 3-sn-phosphoglycerides. The protein is Acidic phospholipase A2 of Lachesis stenophrys (Central American bushmaster).